Consider the following 368-residue polypeptide: 7,8-didemethyl-8-hydroxy-5-deazariboflavin synthase (368 aa).

In terms of domain architecture, Radical SAM core spans 36-272 (LSYCRNVFLP…EEVSVQVPPN (237 aa)). C50, C54, and C57 together coordinate [4Fe-4S] cluster.

This sequence belongs to the radical SAM superfamily. CofG family. In terms of assembly, consists of two subunits, CofG and CofH. [4Fe-4S] cluster is required as a cofactor.

It catalyses the reaction 5-amino-5-(4-hydroxybenzyl)-6-(D-ribitylimino)-5,6-dihydrouracil + S-adenosyl-L-methionine = 7,8-didemethyl-8-hydroxy-5-deazariboflavin + 5'-deoxyadenosine + L-methionine + NH4(+) + H(+). It functions in the pathway cofactor biosynthesis; coenzyme F0 biosynthesis. Functionally, catalyzes the radical-mediated synthesis of 7,8-didemethyl-8-hydroxy-5-deazariboflavin from 5-amino-5-(4-hydroxybenzyl)-6-(D-ribitylimino)-5,6-dihydrouracil. This Haloarcula marismortui (strain ATCC 43049 / DSM 3752 / JCM 8966 / VKM B-1809) (Halobacterium marismortui) protein is 7,8-didemethyl-8-hydroxy-5-deazariboflavin synthase.